An 830-amino-acid chain; its full sequence is MMLLGSPSSGGYGGKFAGASPAGGTTTMAPSAKQPSSRAPPPGITGGRNDLRILSPAAAAAAVGGLEMKKPEAEGIAESLQATHRKELEASIRKQLQGVELSPSPYDTAWVAMVPLRGSSHNPSFPQCVDWILENQWDDGSWSIDGSISTANKDVLSSTLACVLALNKWNVGREHIRRGLSFIGRNFSIAMDDQAVAPIGFGITFPAMLTLANGSGLEVPVRQNDIDSLNHLREMKIQREAGNHSRGRKAYMAYLAEGFGNLLEWDEIMMFQRKNGSLFNCPSSTAGALANYHDDKALQYLQSLVNKFDGVVPTLYPLNIYCQLSMVDALENMGISQYFASEIKSILDMTYSSWLGRDEEIMLDVTTCAMAFRLLRMNGYDVSSDELSHVAGASGFRDSLQGYLNDRKSVLEVYKTSKHSISENDLILDSIGSWSGSLLKEMLCSNGIQGTPGREEIEFALKYPFYSTLERLVHRKNIVLFDAKGSQMLKTECMPVHDSQDFLALAVDDFCISQSNYQNELNYLESWVKDNRLDQLHFARQKITYCYLSGAATTFRPEMGYARTSWARTAWLTAVIDDLFDVGGLEQEQENLLALMEKWEEPGEDEYYSEDVKIVFQALYNTVNEIGAKASALQGHDVTKYLVDVWLHVVRCMKVEAEWQRSQHLPTFEEYMESGMVSLGQGATVMSALFLIGEKLPEGVVELEEYDEMFRLMGTCGRLLNDIRGIEREESDGKMTNGVSLLVHASGGSMSVDEAKTEVMKRIDASRRKLLSLVVGEQEGPIPRPCKQLFWKMCKILHLFYYQTDGFSSPKEMVSAVDAVIKEPLQLRSL.

Residues Met-1–Asp-50 form a disordered region. The segment covering Gly-23 to Ser-37 has biased composition (polar residues). The Mg(2+) site is built by Asp-577, Asp-581, Asn-721, and Glu-729. Positions Asp-577 to Asp-581 match the DDXXD motif motif.

Belongs to the terpene synthase family. Mg(2+) is required as a cofactor. As to expression, expressed in roots and stems.

It catalyses the reaction ent-copalyl diphosphate = ent-cassa-12,15-diene + diphosphate. Involved in phytocassane phytoalexins biosynthesis. Catalyzes the conversion of ent-copalyl diphosphate to the phytoalexin precursor ent-cassa-12,15-diene. This is Ent-cassa-12,15-diene synthase (KSL7) from Oryza sativa subsp. indica (Rice).